The chain runs to 233 residues: uncharacterized protein (233 aa).

Residues 1-10 show a composition bias toward basic residues; the sequence is MSSKLSKKKL. The tract at residues 1–90 is disordered; sequence MSSKLSKKKL…KRQKGKNNDR (90 aa). The segment covering 11–56 has biased composition (basic and acidic residues); sequence KSLEYRSKKFDKKSQSLEEHEKKVQQKNEELEKKAADKISRDELPE. The segment covering 76–85 has biased composition (basic residues); sequence KTLKSKRQKG. Residues 92–171 enclose the RRM domain; the sequence is VILFVGNLPK…RKINIELTAG (80 aa). Composition is skewed to basic and acidic residues over residues 194–216 and 224–233; these read MRQR…KAVA and IHPDRLRLLQ. The interval 194 to 233 is disordered; that stretch reads MRQRVASEEQQAGEEKMARKAVADEGLESGIHPDRLRLLQ.

It is found in the nucleus. Its subcellular location is the nucleolus. This is an uncharacterized protein from Schizosaccharomyces pombe (strain 972 / ATCC 24843) (Fission yeast).